Consider the following 186-residue polypeptide: Histone deacetylase complex subunit SAP25 (186 aa).

2 disordered regions span residues 1–25 and 148–186; these read MSPL…PSCG and EQTP…GTDT. Polar residues-rich tracts occupy residues 148 to 163 and 177 to 186; these read EQTP…STSC and GDQSCSGTDT.

As to quaternary structure, may be a component of the mSIN3A corepressor complex. Interacts with SIN3A and HDAC2. As to expression, widely expressed.

It is found in the nucleus. Its subcellular location is the cytoplasm. Involved in the transcriptional repression mediated by the mSIN3A but not the N-CoR corepressor complex. This is Histone deacetylase complex subunit SAP25 (Sap25) from Mus musculus (Mouse).